We begin with the raw amino-acid sequence, 342 residues long: Phosphate acyltransferase (342 aa).

Belongs to the PlsX family. As to quaternary structure, homodimer. Probably interacts with PlsY.

It localises to the cytoplasm. It carries out the reaction a fatty acyl-[ACP] + phosphate = an acyl phosphate + holo-[ACP]. Its pathway is lipid metabolism; phospholipid metabolism. In terms of biological role, catalyzes the reversible formation of acyl-phosphate (acyl-PO(4)) from acyl-[acyl-carrier-protein] (acyl-ACP). This enzyme utilizes acyl-ACP as fatty acyl donor, but not acyl-CoA. The protein is Phosphate acyltransferase of Shewanella loihica (strain ATCC BAA-1088 / PV-4).